A 503-amino-acid polypeptide reads, in one-letter code: Cobyric acid synthase (503 aa).

In terms of domain architecture, GATase cobBQ-type spans 251 to 450 (DLDIAVIRLP…IHGIFENAAF (200 aa)). The Nucleophile role is filled by C331. H442 is a catalytic residue.

It belongs to the CobB/CobQ family. CobQ subfamily.

Its pathway is cofactor biosynthesis; adenosylcobalamin biosynthesis. Catalyzes amidations at positions B, D, E, and G on adenosylcobyrinic A,C-diamide. NH(2) groups are provided by glutamine, and one molecule of ATP is hydrogenolyzed for each amidation. The chain is Cobyric acid synthase from Dehalococcoides mccartyi (strain CBDB1).